A 227-amino-acid polypeptide reads, in one-letter code: uncharacterized protein (227 aa).

Residues 1 to 23 (MKKRFSLIMMTGLLFGLTSPAFA) form the signal peptide. Residues 36-227 (NVAVLLDASG…FTQQSLMLSK (192 aa)) form the VWFA domain.

This sequence to B.subtilis YwmD.

This is an uncharacterized protein from Bacillus subtilis (strain 168).